Reading from the N-terminus, the 273-residue chain is 4-hydroxy-tetrahydrodipicolinate reductase (273 aa).

NAD(+) is bound by residues 12–17 (GAGGRM) and E38. R39 provides a ligand contact to NADP(+). Residues 102 to 104 (GTT) and 126 to 129 (AANF) each bind NAD(+). The Proton donor/acceptor role is filled by H159. Position 160 (H160) interacts with (S)-2,3,4,5-tetrahydrodipicolinate. The active-site Proton donor is K163. 169-170 (GT) contributes to the (S)-2,3,4,5-tetrahydrodipicolinate binding site.

Belongs to the DapB family. As to quaternary structure, homotetramer.

The protein resides in the cytoplasm. It carries out the reaction (S)-2,3,4,5-tetrahydrodipicolinate + NAD(+) + H2O = (2S,4S)-4-hydroxy-2,3,4,5-tetrahydrodipicolinate + NADH + H(+). The enzyme catalyses (S)-2,3,4,5-tetrahydrodipicolinate + NADP(+) + H2O = (2S,4S)-4-hydroxy-2,3,4,5-tetrahydrodipicolinate + NADPH + H(+). It participates in amino-acid biosynthesis; L-lysine biosynthesis via DAP pathway; (S)-tetrahydrodipicolinate from L-aspartate: step 4/4. Catalyzes the conversion of 4-hydroxy-tetrahydrodipicolinate (HTPA) to tetrahydrodipicolinate. The chain is 4-hydroxy-tetrahydrodipicolinate reductase from Shigella flexneri.